The sequence spans 190 residues: Ribose 1,5-bisphosphate phosphokinase PhnN (190 aa).

Positions R135–D159 are disordered.

Belongs to the ribose 1,5-bisphosphokinase family.

The enzyme catalyses alpha-D-ribose 1,5-bisphosphate + ATP = 5-phospho-alpha-D-ribose 1-diphosphate + ADP. The protein operates within metabolic intermediate biosynthesis; 5-phospho-alpha-D-ribose 1-diphosphate biosynthesis; 5-phospho-alpha-D-ribose 1-diphosphate from D-ribose 5-phosphate (route II): step 3/3. Its function is as follows. Catalyzes the phosphorylation of ribose 1,5-bisphosphate to 5-phospho-D-ribosyl alpha-1-diphosphate (PRPP). This Pseudofrankia inefficax (strain DSM 45817 / CECT 9037 / DDB 130130 / EuI1c) (Frankia inefficax) protein is Ribose 1,5-bisphosphate phosphokinase PhnN.